We begin with the raw amino-acid sequence, 318 residues long: NADH-ubiquinone oxidoreductase chain 1 (318 aa).

A run of 8 helical transmembrane segments spans residues Pro-2–Leu-22, Ala-76–Ile-96, Leu-100–Gly-120, Leu-146–Ile-166, His-171–Ala-191, Leu-222–Phe-242, Glu-253–Ile-273, and Leu-294–Ile-314.

Belongs to the complex I subunit 1 family. Core subunit of respiratory chain NADH dehydrogenase (Complex I) which is composed of 45 different subunits.

The protein resides in the mitochondrion inner membrane. It catalyses the reaction a ubiquinone + NADH + 5 H(+)(in) = a ubiquinol + NAD(+) + 4 H(+)(out). Its function is as follows. Core subunit of the mitochondrial membrane respiratory chain NADH dehydrogenase (Complex I) which catalyzes electron transfer from NADH through the respiratory chain, using ubiquinone as an electron acceptor. Essential for the catalytic activity and assembly of complex I. This Pongo abelii (Sumatran orangutan) protein is NADH-ubiquinone oxidoreductase chain 1 (MT-ND1).